A 370-amino-acid polypeptide reads, in one-letter code: Dihydrolipoyllysine-residue acetyltransferase component of acetoin cleaving system (370 aa).

The Lipoyl-binding domain maps to 4–79 (IHTLTMPKWG…PVGALLAVVV (76 aa)). At lysine 45 the chain carries N6-lipoyllysine. Positions 135-355 (PLVLVHGFGG…EAGHMVQMEA (221 aa)) constitute an AB hydrolase-1 domain.

The cofactor is (R)-lipoate.

The catalysed reaction is N(6)-[(R)-dihydrolipoyl]-L-lysyl-[protein] + acetyl-CoA = N(6)-[(R)-S(8)-acetyldihydrolipoyl]-L-lysyl-[protein] + CoA. It functions in the pathway ketone degradation; acetoin degradation. The sequence is that of Dihydrolipoyllysine-residue acetyltransferase component of acetoin cleaving system (acoC) from Pseudomonas putida (Arthrobacter siderocapsulatus).